We begin with the raw amino-acid sequence, 242 residues long: Phosphatidylethanolamine-binding protein 4 (242 aa).

The first 26 residues, 1–26 (MTMKLVAAALCLSLLAAGLWVGLSLT), serve as a signal peptide directing secretion. Residues 31-50 (EEGKPGGEKPGGGKPGGSGR) are disordered. The segment covering 38 to 50 (EKPGGGKPGGSGR) has biased composition (gly residues). Asn77 and Asn139 each carry an N-linked (GlcNAc...) asparagine glycan. The interval 210–242 (DPDTSTQFMTQFDEELSSEFGRINDDQEQFNQK) is important for secretion.

It belongs to the phosphatidylethanolamine-binding protein family.

The protein resides in the secreted. Its function is as follows. Promotes AKT phosphorylation, suggesting a possible role in the PI3K-AKT signaling pathway. This chain is Phosphatidylethanolamine-binding protein 4 (Pebp4), found in Mus musculus (Mouse).